Reading from the N-terminus, the 357-residue chain is Protein-glutamate methylesterase/protein-glutamine glutaminase 1 (357 aa).

Residues 7–124 (KVLCVDDSAL…REGLLDYTQT (118 aa)) enclose the Response regulatory domain. 4-aspartylphosphate is present on Asp-58. The region spanning 158–350 (LLSTEKLIIV…QRVMAHLATF (193 aa)) is the CheB-type methylesterase domain. Catalysis depends on residues Ser-170, His-196, and Asp-292.

The protein belongs to the CheB family. In terms of processing, phosphorylated by CheA. Phosphorylation of the N-terminal regulatory domain activates the methylesterase activity.

The protein localises to the cytoplasm. The enzyme catalyses [protein]-L-glutamate 5-O-methyl ester + H2O = L-glutamyl-[protein] + methanol + H(+). It carries out the reaction L-glutaminyl-[protein] + H2O = L-glutamyl-[protein] + NH4(+). Involved in chemotaxis. Part of a chemotaxis signal transduction system that modulates chemotaxis in response to various stimuli. Catalyzes the demethylation of specific methylglutamate residues introduced into the chemoreceptors (methyl-accepting chemotaxis proteins or MCP) by CheR. Also mediates the irreversible deamidation of specific glutamine residues to glutamic acid. The chain is Protein-glutamate methylesterase/protein-glutamine glutaminase 1 from Cupriavidus metallidurans (strain ATCC 43123 / DSM 2839 / NBRC 102507 / CH34) (Ralstonia metallidurans).